The chain runs to 209 residues: Probable septum site-determining protein MinC (209 aa).

Belongs to the MinC family. In terms of assembly, interacts with MinD and FtsZ.

Functionally, cell division inhibitor that blocks the formation of polar Z ring septums. Rapidly oscillates between the poles of the cell to destabilize FtsZ filaments that have formed before they mature into polar Z rings. Prevents FtsZ polymerization. The polypeptide is Probable septum site-determining protein MinC (Clostridium kluyveri (strain NBRC 12016)).